A 364-amino-acid chain; its full sequence is tRNA 2-selenouridine synthase (364 aa).

Positions 14–137 (LIADTPIIDV…LRQTAIQATI (124 aa)) constitute a Rhodanese domain. Cys-97 (S-selanylcysteine intermediate) is an active-site residue.

This sequence belongs to the SelU family. As to quaternary structure, monomer.

The catalysed reaction is 5-methylaminomethyl-2-thiouridine(34) in tRNA + selenophosphate + (2E)-geranyl diphosphate + H2O + H(+) = 5-methylaminomethyl-2-selenouridine(34) in tRNA + (2E)-thiogeraniol + phosphate + diphosphate. The enzyme catalyses 5-methylaminomethyl-2-thiouridine(34) in tRNA + (2E)-geranyl diphosphate = 5-methylaminomethyl-S-(2E)-geranyl-thiouridine(34) in tRNA + diphosphate. It catalyses the reaction 5-methylaminomethyl-S-(2E)-geranyl-thiouridine(34) in tRNA + selenophosphate + H(+) = 5-methylaminomethyl-2-(Se-phospho)selenouridine(34) in tRNA + (2E)-thiogeraniol. It carries out the reaction 5-methylaminomethyl-2-(Se-phospho)selenouridine(34) in tRNA + H2O = 5-methylaminomethyl-2-selenouridine(34) in tRNA + phosphate. Functionally, involved in the post-transcriptional modification of the uridine at the wobble position (U34) of tRNA(Lys), tRNA(Glu) and tRNA(Gln). Catalyzes the conversion of 2-thiouridine (S2U-RNA) to 2-selenouridine (Se2U-RNA). Acts in a two-step process involving geranylation of 2-thiouridine (S2U) to S-geranyl-2-thiouridine (geS2U) and subsequent selenation of the latter derivative to 2-selenouridine (Se2U) in the tRNA chain. The sequence is that of tRNA 2-selenouridine synthase from Escherichia coli (strain K12 / MC4100 / BW2952).